Consider the following 403-residue polypeptide: Exodeoxyribonuclease 7 large subunit (403 aa).

This sequence belongs to the XseA family. Heterooligomer composed of large and small subunits.

It is found in the cytoplasm. The catalysed reaction is Exonucleolytic cleavage in either 5'- to 3'- or 3'- to 5'-direction to yield nucleoside 5'-phosphates.. Its function is as follows. Bidirectionally degrades single-stranded DNA into large acid-insoluble oligonucleotides, which are then degraded further into small acid-soluble oligonucleotides. The protein is Exodeoxyribonuclease 7 large subunit of Streptomyces griseus subsp. griseus (strain JCM 4626 / CBS 651.72 / NBRC 13350 / KCC S-0626 / ISP 5235).